Reading from the N-terminus, the 233-residue chain is Snake venom serine protease BthaTL (233 aa).

The Peptidase S1 domain occupies 1–224 (VIGGDECDIN…YLPWIQSIIA (224 aa)). Cystine bridges form between cysteine 7–cysteine 138, cysteine 25–cysteine 41, cysteine 73–cysteine 231, cysteine 117–cysteine 185, cysteine 149–cysteine 164, and cysteine 175–cysteine 200. Residues histidine 40 and aspartate 85 each act as charge relay system in the active site. The Charge relay system role is filled by serine 179.

Belongs to the peptidase S1 family. Snake venom subfamily. Monomer. In terms of tissue distribution, expressed by the venom gland.

The protein localises to the secreted. Functionally, snake venom serine protease that may act in the hemostasis system of the prey. The sequence is that of Snake venom serine protease BthaTL from Bothrops alternatus (Urutu).